The chain runs to 271 residues: Putative phosphoenolpyruvate synthase regulatory protein (271 aa).

151–158 is a binding site for ADP; that stretch reads GVSRSGKT.

The protein belongs to the pyruvate, phosphate/water dikinase regulatory protein family. PSRP subfamily.

The catalysed reaction is [pyruvate, water dikinase] + ADP = [pyruvate, water dikinase]-phosphate + AMP + H(+). The enzyme catalyses [pyruvate, water dikinase]-phosphate + phosphate + H(+) = [pyruvate, water dikinase] + diphosphate. In terms of biological role, bifunctional serine/threonine kinase and phosphorylase involved in the regulation of the phosphoenolpyruvate synthase (PEPS) by catalyzing its phosphorylation/dephosphorylation. This Burkholderia multivorans (strain ATCC 17616 / 249) protein is Putative phosphoenolpyruvate synthase regulatory protein.